Reading from the N-terminus, the 898-residue chain is Protein kintoun (898 aa).

2 disordered regions span residues 558 to 680 (GELK…VESD) and 765 to 822 (ILGQ…SGIS). A compositionally biased stretch (basic and acidic residues) spans 575 to 602 (INTRTVEDDTKVAKENVKKVDQETAHEG). Over residues 603 to 616 (KKSKKNQRRKNKKR) the composition is skewed to basic residues. Residues 641–656 (NEANSFEGTGSSSEAT) show a composition bias toward polar residues.

Belongs to the PIH1 family. Kintoun subfamily.

Its subcellular location is the cytoplasm. Its function is as follows. Required for cytoplasmic pre-assembly of axonemal dyneins, thereby playing a central role in motility in cilia and flagella. Involved in pre-assembly of dynein arm complexes in the cytoplasm before intraflagellar transport loads them for the ciliary compartment. This chain is Protein kintoun, found in Aedes aegypti (Yellowfever mosquito).